The primary structure comprises 443 residues: 23S rRNA (uracil(1939)-C(5))-methyltransferase RlmD (443 aa).

Positions 8–66 constitute a TRAM domain; it reads KPLPAEPIAAHIESFAHDGKGIAHVDGRVVFVDGALPGEDVTFVYTEIKRDYAAGRVVE. Cysteine 79, cysteine 85, cysteine 88, and cysteine 167 together coordinate [4Fe-4S] cluster. Residues glutamine 276, phenylalanine 305, asparagine 310, glutamate 326, aspartate 353, and aspartate 374 each coordinate S-adenosyl-L-methionine. The active-site Nucleophile is cysteine 400.

This sequence belongs to the class I-like SAM-binding methyltransferase superfamily. RNA M5U methyltransferase family. RlmD subfamily.

The catalysed reaction is uridine(1939) in 23S rRNA + S-adenosyl-L-methionine = 5-methyluridine(1939) in 23S rRNA + S-adenosyl-L-homocysteine + H(+). In terms of biological role, catalyzes the formation of 5-methyl-uridine at position 1939 (m5U1939) in 23S rRNA. In Methylococcus capsulatus (strain ATCC 33009 / NCIMB 11132 / Bath), this protein is 23S rRNA (uracil(1939)-C(5))-methyltransferase RlmD.